A 267-amino-acid chain; its full sequence is Membrane-spanning 4-domains subfamily A member 10 (267 aa).

Residues 1-56 (MAGQAPTAVPGSVTGEVSRWQNLGPAQPAQKVAQPQNLVPDGHLEKALEGSDLLQK) lie on the Cytoplasmic side of the membrane. A helical membrane pass occupies residues 57-77 (LGGFHIAIAFAHLAFGGYLIS). The Extracellular portion of the chain corresponds to 78 to 83 (TVKNLH). Residues 84-104 (LVVLKCWYPLWGTVSFLVAGM) traverse the membrane as a helical segment. Topologically, residues 105–118 (AAMTTVTFPKTSLK) are cytoplasmic. A helical transmembrane segment spans residues 119-139 (VLCVIANVISLFCALAGFFVI). Residues 140 to 168 (AKDLFLEGPFPWPIWRPYPEPTTYIQRLE) are Extracellular-facing. A helical transmembrane segment spans residues 169-189 (LTLFCFTFLEIFLSGSTAITA). The Cytoplasmic portion of the chain corresponds to 190–267 (YRMKRLQAED…LHTGPRTLRK (78 aa)).

This sequence belongs to the MS4A family. As to expression, expressed in thymus, kidney, colon, brain and testis. Expressed also by various hematopoietic and lymphoblastoid cell lines.

The protein localises to the membrane. May be involved in signal transduction as a component of a multimeric receptor complex. In Mus musculus (Mouse), this protein is Membrane-spanning 4-domains subfamily A member 10 (Ms4a10).